The following is a 174-amino-acid chain: Caltractin ICL1e (174 aa).

Residues Met1 to Asp33 form a disordered region. EF-hand domains follow at residues Asp33–Asp68, Ile88–Asn103, Glu105–Thr140, and Met141–Phe174.

It belongs to the centrin family. In terms of assembly, monomer.

Its subcellular location is the cytoplasm. The protein resides in the cytoskeleton. Its function is as follows. Plays a fundamental role in microtubule organizing center structure and function. Component of the infraciliary lattice (ICL) and the ciliary basal bodies. This Paramecium tetraurelia protein is Caltractin ICL1e (Icl1e).